Consider the following 166-residue polypeptide: Putative glycine-rich cell wall structural protein 1 (166 aa).

The N-terminal stretch at 1–23 (MARKVIALAFLLLLTISLSKSNA) is a signal peptide. R2; Tyr-rich repeat units follow at residues 56 to 62 (GYGYNYG) and 93 to 99 (GYGYGYG). The segment at 105–125 (AQGQGSGGGGGGGGGGGGGGS) is disordered. Residues 132-138 (GYGYGYG) form an R2; Tyr-rich repeat. Gly residues predominate over residues 144-160 (GGGGGGDGGGGGGGGSA). The tract at residues 144-166 (GGGGGGDGGGGGGGGSAYVGRHE) is disordered.

It localises to the secreted. The protein localises to the cell wall. Its function is as follows. Responsible for plasticity of the cell wall. The sequence is that of Putative glycine-rich cell wall structural protein 1 (GRP-1) from Oryza sativa subsp. japonica (Rice).